The following is a 405-amino-acid chain: Phosphoglycerate kinase (405 aa).

Residues 21–23 (DFN), Arg36, 59–62 (HLGR), Arg119, and Arg161 each bind substrate. ATP is bound by residues Lys212, Gly301, Glu332, and 361–364 (GGDS).

This sequence belongs to the phosphoglycerate kinase family. In terms of assembly, monomer.

The protein resides in the cytoplasm. The enzyme catalyses (2R)-3-phosphoglycerate + ATP = (2R)-3-phospho-glyceroyl phosphate + ADP. The protein operates within carbohydrate degradation; glycolysis; pyruvate from D-glyceraldehyde 3-phosphate: step 2/5. The polypeptide is Phosphoglycerate kinase (Leuconostoc mesenteroides subsp. mesenteroides (strain ATCC 8293 / DSM 20343 / BCRC 11652 / CCM 1803 / JCM 6124 / NCDO 523 / NBRC 100496 / NCIMB 8023 / NCTC 12954 / NRRL B-1118 / 37Y)).